The following is a 127-amino-acid chain: Large ribosomal subunit protein bL17 (127 aa).

This sequence belongs to the bacterial ribosomal protein bL17 family. In terms of assembly, part of the 50S ribosomal subunit. Contacts protein L32.

The protein is Large ribosomal subunit protein bL17 of Legionella pneumophila (strain Lens).